The sequence spans 1324 residues: Structural maintenance of chromosomes protein 4 (1324 aa).

Positions 1–24 (MSDKGIFRTSSTPSIVDVTPDRGE) are disordered. The residue at position 19 (Thr-19) is a Phosphothreonine; by CDC2. 155–162 (GPNGSGKS) is a binding site for ATP. Coiled coils occupy residues 310–337 (QELSNSDDICAEKESRLKLVLSEKAKLE) and 370–628 (NKKT…KASL). In terms of domain architecture, SMC hinge spans 651–764 (NGFFGRLGDL…KNLEQANRIA (114 aa)). Coiled coils occupy residues 825-1077 (YRQH…MSNL) and 1297-1324 (LSSRLVGIYKTANMTKSVTINNKEILTD).

This sequence belongs to the SMC family. SMC4 subfamily. Forms a heterodimer with cut14/smc2. Component of the condensin complex, which contains the smc2 and smc4 heterodimer, and three non smc subunits that probably regulate the complex: cnd1, cnd2 and cnd3. Interacts with C1739.07. In terms of processing, phosphorylated by CDC2 on Thr-19 at metaphase.

The protein resides in the nucleus. It localises to the cytoplasm. The protein localises to the chromosome. Functionally, central component of the condensin complex, a complex required for conversion of interphase chromatin into mitotic-like condense chromosomes. The condensin complex probably introduces positive supercoils into relaxed DNA in the presence of type I topoisomerases and converts nicked DNA into positive knotted forms in the presence of type II topoisomerases. The polypeptide is Structural maintenance of chromosomes protein 4 (cut3) (Schizosaccharomyces pombe (strain 972 / ATCC 24843) (Fission yeast)).